The following is a 530-amino-acid chain: Ankyrin repeat domain-containing protein 53 (530 aa).

Positions 1–15 (MASAGSTARRAGSGS) are enriched in low complexity. Residues 1–99 (MASAGSTARR…PSPSKESDQT (99 aa)) form a disordered region. Residues 32-41 (PSGSMQQANK) show a composition bias toward polar residues. ANK repeat units lie at residues 139–169 (KGFT…PVDL), 173–206 (NSQT…DLNA), and 210–239 (NGST…NVHA). 2 disordered regions span residues 323 to 360 (GHSL…VDAR) and 383 to 402 (PTMW…QISH). 2 stretches are compositionally biased toward polar residues: residues 326–341 (LVSN…LSKT) and 386–402 (WNVS…QISH).

As to quaternary structure, interacts with PSRC1; recruited by PSRC1 to the spindle during mitosis. Phosphorylated during mitosis.

It is found in the cytoplasm. It localises to the cytoskeleton. Its subcellular location is the spindle. The protein localises to the spindle pole. In terms of biological role, required for normal progression through mitosis. Involved in chromosome alignment and cytokinesis via regulation of microtubules polymerization. This Homo sapiens (Human) protein is Ankyrin repeat domain-containing protein 53 (ANKRD53).